A 179-amino-acid chain; its full sequence is Inner membrane-spanning protein YciB (179 aa).

Helical transmembrane passes span 3 to 23 (FLYD…FGIY), 49 to 69 (NALI…LWLQ), 76 to 96 (WKPT…QWLF), 119 to 139 (LNLA…YVAY), and 149 to 169 (FKLF…TLLL).

It belongs to the YciB family.

Its subcellular location is the cell inner membrane. Functionally, plays a role in cell envelope biogenesis, maintenance of cell envelope integrity and membrane homeostasis. The polypeptide is Inner membrane-spanning protein YciB (Methylobacillus flagellatus (strain ATCC 51484 / DSM 6875 / VKM B-1610 / KT)).